The chain runs to 485 residues: Ribulose bisphosphate carboxylase large chain (485 aa).

Residues 1-2 (MS) constitute a propeptide that is removed on maturation. P3 bears the N-acetylproline mark. An N6,N6,N6-trimethyllysine modification is found at K14. Positions 123 and 173 each coordinate substrate. K175 functions as the Proton acceptor in the catalytic mechanism. K177 contributes to the substrate binding site. K201, D203, and E204 together coordinate Mg(2+). K201 is modified (N6-carboxylysine). H294 (proton acceptor) is an active-site residue. 3 residues coordinate substrate: R295, H327, and S379.

The protein belongs to the RuBisCO large chain family. Type I subfamily. In terms of assembly, heterohexadecamer of 8 large chains and 8 small chains; disulfide-linked. The disulfide link is formed within the large subunit homodimers. The cofactor is Mg(2+). In terms of processing, the disulfide bond which can form in the large chain dimeric partners within the hexadecamer appears to be associated with oxidative stress and protein turnover.

Its subcellular location is the plastid. It is found in the chloroplast. It catalyses the reaction 2 (2R)-3-phosphoglycerate + 2 H(+) = D-ribulose 1,5-bisphosphate + CO2 + H2O. It carries out the reaction D-ribulose 1,5-bisphosphate + O2 = 2-phosphoglycolate + (2R)-3-phosphoglycerate + 2 H(+). Its function is as follows. RuBisCO catalyzes two reactions: the carboxylation of D-ribulose 1,5-bisphosphate, the primary event in carbon dioxide fixation, as well as the oxidative fragmentation of the pentose substrate in the photorespiration process. Both reactions occur simultaneously and in competition at the same active site. The polypeptide is Ribulose bisphosphate carboxylase large chain (Bartlettina sordida (Purple torch)).